Here is a 213-residue protein sequence, read N- to C-terminus: Probable thiopurine S-methyltransferase (213 aa).

Residues Trp10, Leu45, Glu66, and Arg125 each contribute to the S-adenosyl-L-methionine site.

It belongs to the class I-like SAM-binding methyltransferase superfamily. TPMT family.

It is found in the cytoplasm. The catalysed reaction is S-adenosyl-L-methionine + a thiopurine = S-adenosyl-L-homocysteine + a thiopurine S-methylether.. The chain is Probable thiopurine S-methyltransferase from Yarrowia lipolytica (strain CLIB 122 / E 150) (Yeast).